Consider the following 314-residue polypeptide: Cytochrome f (314 aa).

Positions 1–30 (MATNKFFKSLLFALTIAINSFGFCIQDAVA) are cleaved as a signal peptide. Heme is bound by residues Y31, C51, C54, and H55. Residues 280–300 (IYGYLAFCFSVLITQIMLVLK) traverse the membrane as a helical segment.

It belongs to the cytochrome f family. In terms of assembly, the 4 large subunits of the cytochrome b6-f complex are cytochrome b6, subunit IV (17 kDa polypeptide, petD), cytochrome f and the Rieske protein, while the 4 small subunits are PetG, PetL, PetM and PetN. The complex functions as a dimer. The cofactor is heme.

It is found in the plastid. The protein localises to the chloroplast thylakoid membrane. Functionally, component of the cytochrome b6-f complex, which mediates electron transfer between photosystem II (PSII) and photosystem I (PSI), cyclic electron flow around PSI, and state transitions. The sequence is that of Cytochrome f from Phaeodactylum tricornutum (strain CCAP 1055/1).